We begin with the raw amino-acid sequence, 51 residues long: Ovomucoid (51 aa).

Positions 3–51 (VDCSGYPKPACTLEYFPLCGSDNQTYANKCTFCNAVVEKNVTLNHLGEC) constitute a Kazal-like domain. Cystine bridges form between Cys-5-Cys-35, Cys-13-Cys-32, and Cys-21-Cys-51. The N-linked (GlcNAc...) asparagine glycan is linked to Asn-42.

It is found in the secreted. The chain is Ovomucoid from Nothoprocta perdicaria (Chilean tinamou).